A 653-amino-acid chain; its full sequence is E3 ubiquitin-protein ligase TRIM32 (653 aa).

A2 carries the N-acetylalanine modification. An RING-type zinc finger spans residues 20–65 (CPICMESFTEEQLRPKLLHCGHTICRQCLEKLLASSINGVRCPFCS). S55 bears the Phosphoserine; by CHEK2 mark. 4 residues coordinate Zn(2+): C100, C103, C123, and H128. The segment at 103–133 (CGRRLPRQFCRSCGLVLCEPCREADHQPPGH) adopts a B box-type zinc-finger fold. A coiled-coil region spans residues 138 to 197 (VKEAAEERRRDFGEKLTRLRELMGELQRRKAALEGVSKDLQARYKAVLQEYGHEERRVQD). Residues S328, S335, and S339 each carry the phosphoserine modification. 5 NHL repeats span residues 358–401 (LKKM…FTRK), 415–458 (DSFV…YTLD), 459–499 (GHCV…FTVD), 562–605 (GRQI…FPKG), and 606–646 (GGYS…YSYH).

It belongs to the TRIM/RBCC family. In terms of assembly, it self-associates. Interacts with DTNBP1. Interacts with PIAS4/PIASY upon treatment with UVB and TNF-alpha. Interacts with AMBRA1; promoting activation of ULK1 through unanchored 'Lys-63'-linked polyubiquitin chains. Interacts with TICAM1 and TAX1BP1; these interactions target TICAM1 to TAX1BP1-mediated selective autophagic degradation. (Microbial infection) Interacts with S.typhimurium protein SseK3; SseK3 does not glycosylate TRIM32. Post-translationally, ubiquitinated. Phosphorylation at Ser-55 by CHEK2 under oxidative stress, activates the E3 ligase activity and promotes ATG7 ubiquitination leading to positive regulation of the autophagosme assembly. As to expression, spleen, thymus, prostate, testis, ovary, intestine, colon and skeletal muscle.

Its subcellular location is the cytoplasm. The protein resides in the mitochondrion. It localises to the endoplasmic reticulum. It carries out the reaction S-ubiquitinyl-[E2 ubiquitin-conjugating enzyme]-L-cysteine + [acceptor protein]-L-lysine = [E2 ubiquitin-conjugating enzyme]-L-cysteine + N(6)-ubiquitinyl-[acceptor protein]-L-lysine.. Its pathway is protein modification; protein ubiquitination. E3 ubiquitin ligase that plays a role in various biological processes including neural stem cell differentiation, innate immunity, inflammatory resonse and autophagy. Plays a role in virus-triggered induction of IFN-beta and TNF-alpha by mediating the ubiquitination of STING1. Mechanistically, targets STING1 for 'Lys-63'-linked ubiquitination which promotes the interaction of STING1 with TBK1. Regulates bacterial clearance and promotes autophagy in Mycobacterium tuberculosis-infected macrophages. Negatively regulates TLR3/4-mediated innate immune and inflammatory response by triggering the autophagic degradation of TICAM1 in an E3 activity-independent manner. Plays an essential role in oxidative stress induced cell death by inducing loss of transmembrane potential and enhancing mitochondrial reactive oxygen species (ROS) production during oxidative stress conditions. Ubiquitinates XIAP and targets it for proteasomal degradation. Ubiquitinates DTNBP1 (dysbindin) and promotes its degradation. May ubiquitinate BBS2. Ubiquitinates PIAS4/PIASY and promotes its degradation in keratinocytes treated with UVB and TNF-alpha. Also acts as a regulator of autophagy by mediating formation of unanchored 'Lys-63'-linked polyubiquitin chains that activate ULK1: interaction with AMBRA1 is required for ULK1 activation. Positively regulates dendritic branching by promoting ubiquitination and subsequent degradation of the epigenetic factor CDYL. Under metabolic stress and phosphorylation by CHK2, mediates 'Lys-63'-linked ubiquitination of ATG7 at 'Lys-45' to initiate autophagy. Its function is as follows. (Microbial infection) May play a significant role in mediating the biological activity of the HIV-1 Tat protein in vivo. Binds specifically to the activation domain of HIV-1 Tat and can also interact with the HIV-2 and EIAV Tat proteins in vivo. The polypeptide is E3 ubiquitin-protein ligase TRIM32 (Homo sapiens (Human)).